The chain runs to 526 residues: Peptide chain release factor 3 (526 aa).

One can recognise a tr-type G domain in the interval 9 to 277 (NKRRTFAIIS…DFVEYAPGPQ (269 aa)). GTP contacts are provided by residues 18–25 (SHPDAGKT), 86–90 (DTPGH), and 140–143 (NKLD).

Belongs to the TRAFAC class translation factor GTPase superfamily. Classic translation factor GTPase family. PrfC subfamily.

The protein resides in the cytoplasm. In terms of biological role, increases the formation of ribosomal termination complexes and stimulates activities of RF-1 and RF-2. It binds guanine nucleotides and has strong preference for UGA stop codons. It may interact directly with the ribosome. The stimulation of RF-1 and RF-2 is significantly reduced by GTP and GDP, but not by GMP. This chain is Peptide chain release factor 3, found in Legionella pneumophila (strain Lens).